Reading from the N-terminus, the 264-residue chain is 4-hydroxy-tetrahydrodipicolinate reductase (264 aa).

Gly-10–Gln-15 lines the NAD(+) pocket. Position 37 (Arg-37) interacts with NADP(+). NAD(+) is bound by residues Gly-99 to Thr-101 and Ser-121 to Leu-124. His-153 functions as the Proton donor/acceptor in the catalytic mechanism. His-154 is a (S)-2,3,4,5-tetrahydrodipicolinate binding site. Lys-157 functions as the Proton donor in the catalytic mechanism. Gly-163–Thr-164 contacts (S)-2,3,4,5-tetrahydrodipicolinate.

It belongs to the DapB family.

It localises to the cytoplasm. It carries out the reaction (S)-2,3,4,5-tetrahydrodipicolinate + NAD(+) + H2O = (2S,4S)-4-hydroxy-2,3,4,5-tetrahydrodipicolinate + NADH + H(+). The enzyme catalyses (S)-2,3,4,5-tetrahydrodipicolinate + NADP(+) + H2O = (2S,4S)-4-hydroxy-2,3,4,5-tetrahydrodipicolinate + NADPH + H(+). Its pathway is amino-acid biosynthesis; L-lysine biosynthesis via DAP pathway; (S)-tetrahydrodipicolinate from L-aspartate: step 4/4. Its function is as follows. Catalyzes the conversion of 4-hydroxy-tetrahydrodipicolinate (HTPA) to tetrahydrodipicolinate. This Ehrlichia ruminantium (strain Gardel) protein is 4-hydroxy-tetrahydrodipicolinate reductase.